A 434-amino-acid polypeptide reads, in one-letter code: 3-phosphoshikimate 1-carboxyvinyltransferase (434 aa).

Lysine 22, serine 23, and arginine 27 together coordinate 3-phosphoshikimate. Lysine 22 provides a ligand contact to phosphoenolpyruvate. The phosphoenolpyruvate site is built by glycine 93 and arginine 121. 3-phosphoshikimate contacts are provided by serine 168, serine 169, glutamine 170, serine 199, aspartate 320, and lysine 347. Glutamine 170 lines the phosphoenolpyruvate pocket. Catalysis depends on aspartate 320, which acts as the Proton acceptor. 3 residues coordinate phosphoenolpyruvate: arginine 351, arginine 394, and lysine 419.

It belongs to the EPSP synthase family. In terms of assembly, monomer.

The protein localises to the cytoplasm. The catalysed reaction is 3-phosphoshikimate + phosphoenolpyruvate = 5-O-(1-carboxyvinyl)-3-phosphoshikimate + phosphate. It participates in metabolic intermediate biosynthesis; chorismate biosynthesis; chorismate from D-erythrose 4-phosphate and phosphoenolpyruvate: step 6/7. Catalyzes the transfer of the enolpyruvyl moiety of phosphoenolpyruvate (PEP) to the 5-hydroxyl of shikimate-3-phosphate (S3P) to produce enolpyruvyl shikimate-3-phosphate and inorganic phosphate. This chain is 3-phosphoshikimate 1-carboxyvinyltransferase, found in Burkholderia cenocepacia (strain HI2424).